The chain runs to 349 residues: Phosphate acyltransferase (349 aa).

The protein belongs to the PlsX family. In terms of assembly, homodimer. Probably interacts with PlsY.

It localises to the cytoplasm. It catalyses the reaction a fatty acyl-[ACP] + phosphate = an acyl phosphate + holo-[ACP]. Its pathway is lipid metabolism; phospholipid metabolism. Catalyzes the reversible formation of acyl-phosphate (acyl-PO(4)) from acyl-[acyl-carrier-protein] (acyl-ACP). This enzyme utilizes acyl-ACP as fatty acyl donor, but not acyl-CoA. The sequence is that of Phosphate acyltransferase from Albidiferax ferrireducens (strain ATCC BAA-621 / DSM 15236 / T118) (Rhodoferax ferrireducens).